The chain runs to 455 residues: Venom prothrombin activator trocarin-D (455 aa).

Positions 1-20 are cleaved as a signal peptide; sequence MAPQLLLCLILTFLWSLPEA. Residues 21-40 constitute a propeptide that is removed on maturation; the sequence is ESNVFLKSKVANRFLQRTKR. The Gla domain maps to 41 to 86; it reads SNSLFEEIRPGNIERECIEEKCSKEEAREVFEDNEKTETFWNVYVD. A 4-carboxyglutamate mark is found at glutamate 46, glutamate 47, glutamate 54, glutamate 56, glutamate 59, glutamate 60, glutamate 65, glutamate 66, glutamate 69, glutamate 72, and glutamate 75. Cysteine 57 and cysteine 62 are oxidised to a cystine. The 37-residue stretch at 86–122 folds into the EGF-like 1; calcium-binding domain; sequence DGDQCSSNPCHYRGTCKDGIGSYTCTCLPNYEGKNCE. 11 cysteine pairs are disulfide-bonded: cysteine 90-cysteine 101, cysteine 95-cysteine 110, cysteine 112-cysteine 121, cysteine 129-cysteine 140, cysteine 136-cysteine 149, cysteine 151-cysteine 164, cysteine 172-cysteine 328, cysteine 216-cysteine 221, cysteine 236-cysteine 252, cysteine 376-cysteine 390, and cysteine 401-cysteine 429. Serine 92 is a glycosylation site (O-linked (Hex...) serine). The EGF-like 2 domain occupies 129–164; it reads CRVDNGNCWHFCKRVQSETQCSCAESYRLGVDGHSC. The propeptide at 182-209 is activation peptide; that stretch reads REASLPDFVQSQKATLLKKSDNPSPDIR. The 244-residue stretch at 210–453 folds into the Peptidase S1 domain; sequence IVNGMDCKLG…FIPWIKKIMS (244 aa). The active-site Charge relay system is the histidine 251. Asparagine 254 carries N-linked (GlcNAc...) asparagine glycosylation. The Charge relay system role is filled by aspartate 308. Serine 405 serves as the catalytic Charge relay system.

The protein belongs to the peptidase S1 family. Snake venom subfamily. As to quaternary structure, heterodimer of a light chain and a heavy chain; disulfide-linked. Gamma-carboxyglutamate residues are formed by vitamin K dependent carboxylation. These residues are essential for the binding of calcium. In terms of processing, the O-linked saccharides at Ser-92 are a mixture of Xyl-Glc, and Glc along with smaller amounts of Xyl-GlcNAc, GlcNAc, Gal, GalNAc, Xyl-Gal, and Xyl-GalNAc, suggesting that the glycosyl transferases responsible for this modification are non-specific. The N-linked carbohydrate at Asn-254 (Asn-45 of the heavy chain) is a sialylated and diantennary oligosaccharide. As to expression, expressed by the venom gland.

The protein localises to the secreted. The enzyme catalyses Selective cleavage of Arg-|-Thr and then Arg-|-Ile bonds in prothrombin to form thrombin.. Its activity is regulated as follows. Activated by calcium and phospholipids. Its function is as follows. Snake prothrombin activator that attacks the hemostatic system of prey. This protein is functionally similar to blood coagulation factor Xa. Induces cyanosis and death in mice at 1 mg/kg body weight during blood clotting. The protein is Venom prothrombin activator trocarin-D of Tropidechis carinatus (Australian rough-scaled snake).